Consider the following 196-residue polypeptide: MGSRSSHAAVIPDGDSIRRETGFSQASLLRLHHRFRALDRNKKGYLSRMDLQQIGALAVNPLGDRIIESFFPDGSQRVDFPGFVRVLAHFRPVEDEDTETQDPKKPEPLNSRRNKLHYAFQLYDLDRDGKISRHEMLQVLRLMVGVQVTEEQLENIADRTVQEADEDGDGAVSFVEFTKSLEKMDVEQKMSIRILK.

Gly-2 carries N-myristoyl glycine lipidation. 4 EF-hand domains span residues 26 to 61 (ASLL…AVNP), 71 to 106 (FPDG…PKKP), 111 to 146 (SRRN…MVGV), and 152 to 187 (QLEN…MDVE). The residue at position 27 (Ser-27) is a Phosphoserine. Residues Asp-124, Asp-126, Asp-128, Lys-130, and Glu-135 each contribute to the Ca(2+) site. Positions 137 to 148 (LQVLRLMVGVQV) match the Nuclear export signal motif. Positions 165, 167, 169, and 176 each coordinate Ca(2+).

This sequence belongs to the calcineurin regulatory subunit family. CHP subfamily. As to quaternary structure, interacts with PPP3CA. Interacts with SLC9A1/NHE1; the interaction occurs in a calcium-dependent manner. As to expression, expressed in malignantly transformed cells but not detected in normal tissues.

It localises to the nucleus. The protein localises to the cytoplasm. Its subcellular location is the cell membrane. Functionally, functions as an integral cofactor in cell pH regulation by controlling plasma membrane-type Na(+)/H(+) exchange activity. Binds to and activates SLC9A1/NHE1 in a serum-independent manner, thus increasing pH and protecting cells from serum deprivation-induced death. Also plays a role in the regulation of cell proliferation and tumor growth by increasing the phosphatase activity of PPP3CA in a calcium-dependent manner. Activator of the calcineurin/NFAT signaling pathway. Involved in the cytoplasmic translocation of the transcription factor NFATC3 to the nucleus. The chain is Calcineurin B homologous protein 2 (CHP2) from Homo sapiens (Human).